Reading from the N-terminus, the 358-residue chain is Peptide chain release factor 1 (358 aa).

Gln237 is subject to N5-methylglutamine.

It belongs to the prokaryotic/mitochondrial release factor family. Post-translationally, methylated by PrmC. Methylation increases the termination efficiency of RF1.

It is found in the cytoplasm. Peptide chain release factor 1 directs the termination of translation in response to the peptide chain termination codons UAG and UAA. The protein is Peptide chain release factor 1 of Streptomyces avermitilis (strain ATCC 31267 / DSM 46492 / JCM 5070 / NBRC 14893 / NCIMB 12804 / NRRL 8165 / MA-4680).